The primary structure comprises 857 residues: uncharacterized protein (857 aa).

Disordered stretches follow at residues 316 to 339 (PPAP…TKEN), 484 to 561 (AKQP…PRTN), 619 to 777 (GQFP…PKPQ), and 809 to 836 (EQRP…STGK). Composition is skewed to basic and acidic residues over residues 324-339 (PENK…TKEN), 518-534 (KKTE…KAEE), and 630-640 (QRAESSIDKDC). Residues 683 to 700 (RTTTVQPHSHSAQPTTLR) show a composition bias toward polar residues. The span at 708-725 (SSSLIASAKPAPPISSSS) shows a compositional bias: low complexity. A compositionally biased stretch (polar residues) spans 726–738 (TGPNVTNPNQSSA). A compositionally biased stretch (basic and acidic residues) spans 809 to 828 (EQRPEREAMKRQAQQERENA).

This is an uncharacterized protein from Mus musculus (Mouse).